The following is a 280-amino-acid chain: Ribosomal RNA small subunit methyltransferase A (280 aa).

Residues H13, L15, G40, E61, D85, and N106 each contribute to the S-adenosyl-L-methionine site. The segment at 258–280 (RPPADVEDANAPHTEQGKGDNSQ) is disordered.

The protein belongs to the class I-like SAM-binding methyltransferase superfamily. rRNA adenine N(6)-methyltransferase family. RsmA subfamily.

It localises to the cytoplasm. The catalysed reaction is adenosine(1518)/adenosine(1519) in 16S rRNA + 4 S-adenosyl-L-methionine = N(6)-dimethyladenosine(1518)/N(6)-dimethyladenosine(1519) in 16S rRNA + 4 S-adenosyl-L-homocysteine + 4 H(+). In terms of biological role, specifically dimethylates two adjacent adenosines (A1518 and A1519) in the loop of a conserved hairpin near the 3'-end of 16S rRNA in the 30S particle. May play a critical role in biogenesis of 30S subunits. The chain is Ribosomal RNA small subunit methyltransferase A from Alcanivorax borkumensis (strain ATCC 700651 / DSM 11573 / NCIMB 13689 / SK2).